The following is a 152-amino-acid chain: Flagellar assembly factor FliW (152 aa).

This sequence belongs to the FliW family. As to quaternary structure, interacts with translational regulator CsrA and flagellin(s).

Its subcellular location is the cytoplasm. In terms of biological role, acts as an anti-CsrA protein, binds CsrA and prevents it from repressing translation of its target genes, one of which is flagellin. Binds to flagellin and participates in the assembly of the flagellum. This chain is Flagellar assembly factor FliW, found in Caldicellulosiruptor bescii (strain ATCC BAA-1888 / DSM 6725 / KCTC 15123 / Z-1320) (Anaerocellum thermophilum).